The chain runs to 146 residues: Outer envelope pore protein 16, chloroplastic (146 aa).

Positions 1–73 (MPRSSFSGSL…EKSLKKMCKE (73 aa)) are contains 4 beta strands. The next 3 membrane-spanning stretches (helical) occupy residues 75–91 (AYWG…EYGV), 103–119 (AMFG…AASN), and 128–146 (DAIT…NYLT).

Belongs to the Tim17/Tim22/Tim23 family. Plastid outer envelope porin OEP16 (TC 1.B.30) subfamily. Homodimer and oligomers in membrane.

Its subcellular location is the plastid. It is found in the chloroplast outer membrane. The protein resides in the etioplast membrane. Its function is as follows. Voltage-dependent high-conductance channel with a slight cation-selectivity; selective for amino acids but excludes triosephosphates or uncharged sugars. Non-essential amino acid-selective channel protein and translocation pore for NADPH:protochlorophyllide oxidoreductase A (PORA) and possibly PORB. In Pisum sativum (Garden pea), this protein is Outer envelope pore protein 16, chloroplastic (OEP16).